A 446-amino-acid chain; its full sequence is Histidine--tRNA ligase (446 aa).

It belongs to the class-II aminoacyl-tRNA synthetase family. In terms of assembly, homodimer.

Its subcellular location is the cytoplasm. The enzyme catalyses tRNA(His) + L-histidine + ATP = L-histidyl-tRNA(His) + AMP + diphosphate + H(+). This Burkholderia cenocepacia (strain HI2424) protein is Histidine--tRNA ligase.